Reading from the N-terminus, the 396-residue chain is S-adenosylmethionine synthase (396 aa).

Histidine 15 serves as a coordination point for ATP. A Mg(2+)-binding site is contributed by aspartate 17. Glutamate 43 lines the K(+) pocket. 2 residues coordinate L-methionine: glutamate 56 and glutamine 99. The flexible loop stretch occupies residues 99-109 (QSADIALGVDR). ATP contacts are provided by residues 175 to 177 (DGK), 241 to 242 (RF), aspartate 250, 256 to 257 (RK), alanine 273, and lysine 277. Aspartate 250 is an L-methionine binding site. Lysine 281 is a binding site for L-methionine.

The protein belongs to the AdoMet synthase family. In terms of assembly, homotetramer; dimer of dimers. Mg(2+) serves as cofactor. K(+) is required as a cofactor.

The protein localises to the cytoplasm. It catalyses the reaction L-methionine + ATP + H2O = S-adenosyl-L-methionine + phosphate + diphosphate. It functions in the pathway amino-acid biosynthesis; S-adenosyl-L-methionine biosynthesis; S-adenosyl-L-methionine from L-methionine: step 1/1. In terms of biological role, catalyzes the formation of S-adenosylmethionine (AdoMet) from methionine and ATP. The overall synthetic reaction is composed of two sequential steps, AdoMet formation and the subsequent tripolyphosphate hydrolysis which occurs prior to release of AdoMet from the enzyme. In Desulfitobacterium hafniense (strain DSM 10664 / DCB-2), this protein is S-adenosylmethionine synthase.